Reading from the N-terminus, the 575-residue chain is MQCRSIVHRLYSKVSHVTTPIFYPNAKPHLGHLYSSLLSDVYHRWQLFKGNLSFFTTGTDEHGLKIQCASESNGFDQPKKFVDKLYPEFVQLDKIYGINYTRFIRTTDPDHIENVMKLWELCLKNGYIYMGEHKGWYSISDETFYPESKVIKDPKNDGKYLNTESKNEVVYQSETNYFFRLSLFNKKIVDHIRKNPDFIFPASKRDQILKELETGGTLPDLSISRPSARLKWGIPTPNDPSQKVYVWFDALCNYLSSIGGIPSILSNATEVVSRHYSDKSNVKGQLLIPYPKEVQRNTIHVIGKDIAKFHTVYWPSFLLAAGLPLPRQIVVHGHWLCNGMKMSKSLGNVVDPIDMARYYGADIVRWFLLENSKLEEDGDFQEAKLYETRELLVSKWGNLINRCCGSKFNIERAVMKFSDKANFQFQEIFQNEPIVSERIENLAKLLNKSQEVFDEKIAIFQYPQLLRHVWSIINDANTLVQNSKPWERELDQQDNIIFLAMETSRILSILCQSIIPSLSQSFLDRIDVSKEKRTINYARLGSDKTYGKQSNKKGREVPLKKIPFRLQEEQTNMRS.

The 'HIGH' region motif lies at 20–32 (PIFYPNAKPHLGH). The short motif at 341-345 (KMSKS) is the 'KMSKS' region element. K344 serves as a coordination point for ATP.

Belongs to the class-I aminoacyl-tRNA synthetase family.

It localises to the mitochondrion matrix. The catalysed reaction is tRNA(Met) + L-methionine + ATP = L-methionyl-tRNA(Met) + AMP + diphosphate. In terms of biological role, catalyzes the attachment of methionine to tRNA(Met) in the mitochondrion. In Saccharomyces cerevisiae (strain ATCC 204508 / S288c) (Baker's yeast), this protein is Methionine--tRNA ligase, mitochondrial (MSM1).